A 449-amino-acid polypeptide reads, in one-letter code: tRNA-2-methylthio-N(6)-dimethylallyladenosine synthase (449 aa).

Residues 13–128 form the MTTase N-terminal domain; the sequence is RRIFIETYGC…LPHLIGTVEK (116 aa). Residues C22, C58, C92, C166, C170, and C173 each coordinate [4Fe-4S] cluster. Positions 152–383 constitute a Radical SAM core domain; that stretch reads SRIKISGFIS…ITLQLKISLM (232 aa). The TRAM domain maps to 386–449; the sequence is KENIGKTMEI…AATLFGDPKL (64 aa).

The protein belongs to the methylthiotransferase family. MiaB subfamily. As to quaternary structure, monomer. It depends on [4Fe-4S] cluster as a cofactor.

The protein resides in the cytoplasm. It catalyses the reaction N(6)-dimethylallyladenosine(37) in tRNA + (sulfur carrier)-SH + AH2 + 2 S-adenosyl-L-methionine = 2-methylsulfanyl-N(6)-dimethylallyladenosine(37) in tRNA + (sulfur carrier)-H + 5'-deoxyadenosine + L-methionine + A + S-adenosyl-L-homocysteine + 2 H(+). Functionally, catalyzes the methylthiolation of N6-(dimethylallyl)adenosine (i(6)A), leading to the formation of 2-methylthio-N6-(dimethylallyl)adenosine (ms(2)i(6)A) at position 37 in tRNAs that read codons beginning with uridine. The protein is tRNA-2-methylthio-N(6)-dimethylallyladenosine synthase of Azobacteroides pseudotrichonymphae genomovar. CFP2.